Here is a 496-residue protein sequence, read N- to C-terminus: DNA-directed DNA/RNA polymerase mu (496 aa).

The tract at residues Met-1–Pro-22 is disordered. Ser-12 bears the Phosphoserine mark. Low complexity predominate over residues Ser-12–Pro-22. Residues Pro-23–His-122 form the BRCT domain. 2 residues coordinate Na(+): Thr-241 and Val-243. Residues Arg-323–Asp-332 are involved in ssDNA binding. Positions 330, 332, and 420 each coordinate Mg(2+).

It belongs to the DNA polymerase type-X family. It depends on Mg(2+) as a cofactor.

Its subcellular location is the nucleus. The enzyme catalyses DNA(n) + a 2'-deoxyribonucleoside 5'-triphosphate = DNA(n+1) + diphosphate. Functionally, gap-filling polymerase involved in repair of DNA double-strand breaks by non-homologous end joining (NHEJ). Participates in immunoglobulin (Ig) light chain gene rearrangement in V(D)J recombination. This Mus musculus (Mouse) protein is DNA-directed DNA/RNA polymerase mu (Polm).